The chain runs to 208 residues: Large ribosomal subunit protein uL4 (208 aa).

Residues Arg-45 to Ser-84 are disordered. The segment covering Gly-60 to Gly-71 has biased composition (basic residues).

It belongs to the universal ribosomal protein uL4 family. Part of the 50S ribosomal subunit.

Functionally, one of the primary rRNA binding proteins, this protein initially binds near the 5'-end of the 23S rRNA. It is important during the early stages of 50S assembly. It makes multiple contacts with different domains of the 23S rRNA in the assembled 50S subunit and ribosome. In terms of biological role, forms part of the polypeptide exit tunnel. The protein is Large ribosomal subunit protein uL4 of Prosthecochloris aestuarii (strain DSM 271 / SK 413).